Reading from the N-terminus, the 73-residue chain is Venom peptide La1 (73 aa).

At lysine 73 the chain carries Lysine amide.

The protein belongs to the scorpion La1-like peptide family. Contains 4 disulfide bonds. Expressed by the venom gland.

The protein localises to the secreted. Its function is as follows. Not toxic to insect. The sequence is that of Venom peptide La1 from Liocheles australasiae (Dwarf wood scorpion).